A 191-amino-acid chain; its full sequence is Peptidyl-tRNA hydrolase (191 aa).

Tyr16 contributes to the tRNA binding site. The Proton acceptor role is filled by His21. TRNA-binding residues include Phe66, Asn68, and Asn114.

This sequence belongs to the PTH family. As to quaternary structure, monomer.

The protein resides in the cytoplasm. The enzyme catalyses an N-acyl-L-alpha-aminoacyl-tRNA + H2O = an N-acyl-L-amino acid + a tRNA + H(+). In terms of biological role, hydrolyzes ribosome-free peptidyl-tRNAs (with 1 or more amino acids incorporated), which drop off the ribosome during protein synthesis, or as a result of ribosome stalling. Catalyzes the release of premature peptidyl moieties from peptidyl-tRNA molecules trapped in stalled 50S ribosomal subunits, and thus maintains levels of free tRNAs and 50S ribosomes. The protein is Peptidyl-tRNA hydrolase of Geotalea daltonii (strain DSM 22248 / JCM 15807 / FRC-32) (Geobacter daltonii).